The chain runs to 200 residues: 3-isopropylmalate dehydratase small subunit (200 aa).

This sequence belongs to the LeuD family. LeuD type 1 subfamily. In terms of assembly, heterodimer of LeuC and LeuD.

It catalyses the reaction (2R,3S)-3-isopropylmalate = (2S)-2-isopropylmalate. It functions in the pathway amino-acid biosynthesis; L-leucine biosynthesis; L-leucine from 3-methyl-2-oxobutanoate: step 2/4. Its function is as follows. Catalyzes the isomerization between 2-isopropylmalate and 3-isopropylmalate, via the formation of 2-isopropylmaleate. The chain is 3-isopropylmalate dehydratase small subunit from Aliivibrio fischeri (strain MJ11) (Vibrio fischeri).